Reading from the N-terminus, the 498-residue chain is Lysine--tRNA ligase (498 aa).

Residues E407 and E414 each coordinate Mg(2+).

Belongs to the class-II aminoacyl-tRNA synthetase family. Homodimer. Mg(2+) serves as cofactor.

It is found in the cytoplasm. It carries out the reaction tRNA(Lys) + L-lysine + ATP = L-lysyl-tRNA(Lys) + AMP + diphosphate. This chain is Lysine--tRNA ligase (lysS), found in Rhizobium meliloti (strain 1021) (Ensifer meliloti).